We begin with the raw amino-acid sequence, 289 residues long: Acetylglutamate kinase (289 aa).

Substrate contacts are provided by residues 60-61 (GG), R82, and N182.

This sequence belongs to the acetylglutamate kinase family. ArgB subfamily.

It is found in the cytoplasm. It carries out the reaction N-acetyl-L-glutamate + ATP = N-acetyl-L-glutamyl 5-phosphate + ADP. The protein operates within amino-acid biosynthesis; L-arginine biosynthesis; N(2)-acetyl-L-ornithine from L-glutamate: step 2/4. In terms of biological role, catalyzes the ATP-dependent phosphorylation of N-acetyl-L-glutamate. The polypeptide is Acetylglutamate kinase (Methanothrix thermoacetophila (strain DSM 6194 / JCM 14653 / NBRC 101360 / PT) (Methanosaeta thermophila)).